A 266-amino-acid polypeptide reads, in one-letter code: MWWFQQGLSFLPSALVIWTSAAFIFSYITAVTLHHIDPALPYISDTGTVAPEKCLFGAMLNIAAVLCIATIYVRYKQVHALSPEENVIIKLNKAGLVLGILSCLGLSIVANFQKTTLFAAHVSGAVLTFGMGSLYMFVQTILSYQMQPKIHGKQVFWIRLLLVIWCGVSALSMLTCSSVLHSGNFGTDLEQKLHWNPEDKGYVLHMITTAAEWSMSFSFFGFFLTYIRDFQKISLRVEANLHGLTLYDTAPCPINNERTRLLSRDI.

6 helical membrane-spanning segments follow: residues 8–28 (LSFL…FSYI), 53–73 (KCLF…TIYV), 88–108 (IIKL…GLSI), 118–138 (FAAH…YMFV), 160–180 (LLLV…SSVL), and 207–227 (ITTA…LTYI).

This sequence belongs to the DRAM/TMEM150 family. Expression is down-regulated in ovarian tumors (at protein level). Widely expressed with highest levels in placenta and heart. Expressed in the retina. Not detected in brain or thymus.

The protein resides in the lysosome membrane. It is found in the photoreceptor inner segment. The protein localises to the apical cell membrane. Functionally, plays a role in the initiation of autophagy. In the retina, might be involved in the process of photoreceptor cells renewal and recycling to preserve visual function. Induces apoptotic cell death when coexpressed with DRAM1. This chain is DNA damage-regulated autophagy modulator protein 2 (DRAM2), found in Homo sapiens (Human).